Here is a 304-residue protein sequence, read N- to C-terminus: Mitochondrial glycine transporter (304 aa).

Solcar repeat units lie at residues 3 to 82 (GKSK…VREA), 106 to 186 (ENLI…LKVA), and 209 to 293 (SSAM…LVKR). 6 helical membrane passes run 9–34 (IYAG…TRVQ), 57–83 (GTLP…REAV), 108–133 (LISG…VRYE), 161–184 (GWAA…EQLK), 213–239 (INSV…KTRM), and 268–286 (GLAL…SWCI).

This sequence belongs to the mitochondrial carrier (TC 2.A.29) family. SLC25A38 subfamily.

The protein resides in the mitochondrion inner membrane. It catalyses the reaction glycine(in) = glycine(out). In terms of biological role, mitochondrial glycine transporter that imports glycine into the mitochondrial matrix. Plays an important role in providing glycine for the first enzymatic step in heme biosynthesis, the condensation of glycine with succinyl-CoA to produce 5-aminolevulinate (ALA) in the mitochondrial matrix. This Yarrowia lipolytica (strain CLIB 122 / E 150) (Yeast) protein is Mitochondrial glycine transporter.